The chain runs to 154 residues: Large ribosomal subunit protein uL13 (154 aa).

The segment at 132 to 154 (PHEAQQPETLDVGAMNRKNKRAA) is disordered.

The protein belongs to the universal ribosomal protein uL13 family. As to quaternary structure, part of the 50S ribosomal subunit.

Its function is as follows. This protein is one of the early assembly proteins of the 50S ribosomal subunit, although it is not seen to bind rRNA by itself. It is important during the early stages of 50S assembly. The polypeptide is Large ribosomal subunit protein uL13 (Rhodopseudomonas palustris (strain HaA2)).